Consider the following 505-residue polypeptide: Activin receptor type-1B (505 aa).

Residues 1 to 23 form the signal peptide; sequence MAESAGASSFFPLVVLLLAGSGG. Residues 24–126 lie on the Extracellular side of the membrane; it reads SGPRGIQALL…AHPSMWGPVE (103 aa). The N-linked (GlcNAc...) asparagine glycan is linked to Asn43. The chain crosses the membrane as a helical span at residues 127 to 149; it reads LVGIIAGPVFLLFLIIIIVFLVI. Residues 150–505 are Cytoplasmic-facing; that stretch reads NYHQRVYHNR…QLSVQEDVKI (356 aa). In terms of domain architecture, GS spans 177 to 206; the sequence is KTLQDLVYDLSTSGSGSGLPLFVQRTVART. Positions 207-497 constitute a Protein kinase domain; that stretch reads IVLQEIIGKG…LRIKKTLSQL (291 aa). Residues 213–221 and Lys234 contribute to the ATP site; that span reads IGKGRFGEV. Catalysis depends on Asp335, which acts as the Proton acceptor. The residue at position 380 (Tyr380) is a Phosphotyrosine.

The protein belongs to the protein kinase superfamily. TKL Ser/Thr protein kinase family. TGFB receptor subfamily. Forms an activin receptor complex with activin receptor type-2 (ACVR2A or ACVR2B). Part of a complex consisting of MAGI2/ARIP1, ACVR2A, ACVR1B and SMAD3. Interacts with SMAD2 and SMAD3. Interacts with SMAD7. Interacts with FKBP1A. Interacts with IGSF1. Interacts with CRIPTO. Interacts with TDP2. Interacts with TSC22D1/TSC-22. Autophosphorylated. Phosphorylated by activin receptor type-2 (ACVR2A or ACVR2B) in response to activin-binding at serine and threonine residues in the GS domain. Phosphorylation of ACVR1B by activin receptor type-2 regulates association with SMAD7. Post-translationally, ubiquitinated. Level of ubiquitination is regulated by the SMAD7-SMURF1 complex. In terms of processing, ubiquitinated.

Its subcellular location is the cell membrane. It catalyses the reaction L-threonyl-[receptor-protein] + ATP = O-phospho-L-threonyl-[receptor-protein] + ADP + H(+). The catalysed reaction is L-seryl-[receptor-protein] + ATP = O-phospho-L-seryl-[receptor-protein] + ADP + H(+). With respect to regulation, activin receptor type-2 (ACVR2A or ACVR2B) activates the type-1 receptor through phosphorylation of its regulatory GS domain. Functionally, transmembrane serine/threonine kinase activin type-1 receptor forming an activin receptor complex with activin receptor type-2 (ACVR2A or ACVR2B). Transduces the activin signal from the cell surface to the cytoplasm and is thus regulating a many physiological and pathological processes including neuronal differentiation and neuronal survival, hair follicle development and cycling, FSH production by the pituitary gland, wound healing, extracellular matrix production, immunosuppression and carcinogenesis. Activin is also thought to have a paracrine or autocrine role in follicular development in the ovary. Within the receptor complex, type-2 receptors (ACVR2A and/or ACVR2B) act as a primary activin receptors whereas the type-1 receptors like ACVR1B act as downstream transducers of activin signals. Activin binds to type-2 receptor at the plasma membrane and activates its serine-threonine kinase. The activated receptor type-2 then phosphorylates and activates the type-1 receptor such as ACVR1B. Once activated, the type-1 receptor binds and phosphorylates the SMAD proteins SMAD2 and SMAD3, on serine residues of the C-terminal tail. Soon after their association with the activin receptor and subsequent phosphorylation, SMAD2 and SMAD3 are released into the cytoplasm where they interact with the common partner SMAD4. This SMAD complex translocates into the nucleus where it mediates activin-induced transcription. Inhibitory SMAD7, which is recruited to ACVR1B through FKBP1A, can prevent the association of SMAD2 and SMAD3 with the activin receptor complex, thereby blocking the activin signal. Activin signal transduction is also antagonized by the binding to the receptor of inhibin-B via the IGSF1 inhibin coreceptor. ACVR1B also phosphorylates TDP2. This chain is Activin receptor type-1B (Acvr1b), found in Mus musculus (Mouse).